A 179-amino-acid polypeptide reads, in one-letter code: Acireductone dioxygenase (179 aa).

The Fe(2+) site is built by histidine 97, histidine 99, glutamate 103, and histidine 141. The Ni(2+) site is built by histidine 97, histidine 99, glutamate 103, and histidine 141.

The protein belongs to the acireductone dioxygenase (ARD) family. In terms of assembly, monomer. Requires Fe(2+) as cofactor. It depends on Ni(2+) as a cofactor.

It catalyses the reaction 1,2-dihydroxy-5-(methylsulfanyl)pent-1-en-3-one + O2 = 3-(methylsulfanyl)propanoate + CO + formate + 2 H(+). The enzyme catalyses 1,2-dihydroxy-5-(methylsulfanyl)pent-1-en-3-one + O2 = 4-methylsulfanyl-2-oxobutanoate + formate + 2 H(+). It functions in the pathway amino-acid biosynthesis; L-methionine biosynthesis via salvage pathway; L-methionine from S-methyl-5-thio-alpha-D-ribose 1-phosphate: step 5/6. Functionally, catalyzes 2 different reactions between oxygen and the acireductone 1,2-dihydroxy-3-keto-5-methylthiopentene (DHK-MTPene) depending upon the metal bound in the active site. Fe-containing acireductone dioxygenase (Fe-ARD) produces formate and 2-keto-4-methylthiobutyrate (KMTB), the alpha-ketoacid precursor of methionine in the methionine recycle pathway. Ni-containing acireductone dioxygenase (Ni-ARD) produces methylthiopropionate, carbon monoxide and formate, and does not lie on the methionine recycle pathway. The polypeptide is Acireductone dioxygenase (Gluconacetobacter diazotrophicus (strain ATCC 49037 / DSM 5601 / CCUG 37298 / CIP 103539 / LMG 7603 / PAl5)).